Here is a 347-residue protein sequence, read N- to C-terminus: Leucine-rich repeat-containing protein 69 (347 aa).

8 LRR repeats span residues 38–60, 61–82, 84–105, 108–129, 131–153, 154–175, 177–199, and 200–222; these read GLKT…CNLT, QLTT…MKYL, SLKN…ACDG, NLIL…VSRL, SLTY…CFLE, NLVE…IKFL, KLQK…CDLK, and KLRI…QDLK.

The protein belongs to the LRRC69 family.

The sequence is that of Leucine-rich repeat-containing protein 69 (LRRC69) from Homo sapiens (Human).